A 581-amino-acid polypeptide reads, in one-letter code: Multicopper oxidase LPR1 (581 aa).

The N-terminal stretch at 1–28 is a signal peptide; that stretch reads MESLLCRRRIKRVMVLIIALTWLRSTCG. His-148, His-150, His-196, and His-198 together coordinate Cu cation. 4 N-linked (GlcNAc...) asparagine glycosylation sites follow: Asn-254, Asn-298, Asn-386, and Asn-458. Residues 283-352 enclose the Plastocyanin-like domain; the sequence is PRLNVRRRKY…DVVVDFYKSP (70 aa). Cu cation is bound by residues His-464, His-467, and His-469. N-linked (GlcNAc...) asparagine glycosylation is present at Asn-546. His-562, Cys-563, His-564, His-568, and Met-573 together coordinate Cu cation.

Belongs to the multicopper oxidase family. It depends on Cu cation as a cofactor.

It is found in the endoplasmic reticulum membrane. In terms of biological role, multicopper oxidase that may be involved in copper homeostasis and oxidative stress response, and that is necessary for root growth inhibition by low phosphate conditions. Functions together with LPR2 and PDR2 in a common pathway that adjusts root meristem activity to phosphate availability. Oxidizes the substrate 2,2'-azinobis-(3-ethylbenzthiazoline-6-sulphonate) in vitro. The polypeptide is Multicopper oxidase LPR1 (LPR1) (Arabidopsis thaliana (Mouse-ear cress)).